The following is a 185-amino-acid chain: Guanylate kinase (185 aa).

Positions 3–181 (TRMIIVAAPS…SYGEFKKIVE (179 aa)) constitute a Guanylate kinase-like domain. 10-17 (APSGAGKS) contacts ATP.

It belongs to the guanylate kinase family.

It localises to the cytoplasm. It carries out the reaction GMP + ATP = GDP + ADP. Its function is as follows. Essential for recycling GMP and indirectly, cGMP. This is Guanylate kinase from Bdellovibrio bacteriovorus (strain ATCC 15356 / DSM 50701 / NCIMB 9529 / HD100).